The sequence spans 297 residues: UTP--glucose-1-phosphate uridylyltransferase (297 aa).

It belongs to the UDPGP type 2 family.

It carries out the reaction alpha-D-glucose 1-phosphate + UTP + H(+) = UDP-alpha-D-glucose + diphosphate. Its pathway is carbohydrate metabolism; nucleotide-sugar metabolism. It functions in the pathway bacterial outer membrane biogenesis; lipopolysaccharide biosynthesis. The protein is UTP--glucose-1-phosphate uridylyltransferase (galF) of Escherichia coli O157:H7.